The following is a 113-amino-acid chain: Large ribosomal subunit protein uL22 (113 aa).

This sequence belongs to the universal ribosomal protein uL22 family. In terms of assembly, part of the 50S ribosomal subunit.

In terms of biological role, this protein binds specifically to 23S rRNA; its binding is stimulated by other ribosomal proteins, e.g. L4, L17, and L20. It is important during the early stages of 50S assembly. It makes multiple contacts with different domains of the 23S rRNA in the assembled 50S subunit and ribosome. Functionally, the globular domain of the protein is located near the polypeptide exit tunnel on the outside of the subunit, while an extended beta-hairpin is found that lines the wall of the exit tunnel in the center of the 70S ribosome. This is Large ribosomal subunit protein uL22 from Desulforudis audaxviator (strain MP104C).